A 214-amino-acid polypeptide reads, in one-letter code: Ion-translocating oxidoreductase complex subunit G (214 aa).

A helical membrane pass occupies residues Ala-13–Phe-33. Thr-180 carries the FMN phosphoryl threonine modification.

Belongs to the RnfG family. The complex is composed of six subunits: RnfA, RnfB, RnfC, RnfD, RnfE and RnfG. FMN serves as cofactor.

The protein resides in the cell inner membrane. Functionally, part of a membrane-bound complex that couples electron transfer with translocation of ions across the membrane. The chain is Ion-translocating oxidoreductase complex subunit G from Pseudomonas aeruginosa (strain UCBPP-PA14).